A 134-amino-acid polypeptide reads, in one-letter code: Small ribosomal subunit protein bS16 (134 aa).

Residues 79-134 (AGIAKRPSRNNPTKGEPGKKAQERLALAKQAEEEAAAKAAEAAAAAAAPAEEAASE) form a disordered region. The span at 115–134 (AKAAEAAAAAAAPAEEAASE) shows a compositional bias: low complexity.

Belongs to the bacterial ribosomal protein bS16 family.

This chain is Small ribosomal subunit protein bS16, found in Brucella suis (strain ATCC 23445 / NCTC 10510).